The chain runs to 364 residues: 1-acyl-sn-glycerol-3-phosphate acyltransferase epsilon (364 aa).

Helical transmembrane passes span 15 to 35 (LLPS…WGVW) and 61 to 81 (MVLF…GDLP). The short motif at 93-98 (HQSTVD) is the HXXXXD motif element. Residues 344–364 (LYVNTWIYGTLLGCLWVTIKA) form a helical membrane-spanning segment.

Belongs to the 1-acyl-sn-glycerol-3-phosphate acyltransferase family. In terms of tissue distribution, widely expressed.

The protein localises to the endoplasmic reticulum membrane. The protein resides in the nucleus envelope. Its subcellular location is the mitochondrion. The catalysed reaction is a 1-acyl-sn-glycero-3-phosphate + an acyl-CoA = a 1,2-diacyl-sn-glycero-3-phosphate + CoA. It carries out the reaction 1-(9Z-octadecenoyl)-sn-glycero-3-phosphate + tetradecanoyl-CoA = 1-(9Z)-octadecenoyl-2-tetradecanoyl-sn-glycero-3-phosphate + CoA. It catalyses the reaction pentadecanoyl-CoA + 1-(9Z-octadecenoyl)-sn-glycero-3-phosphate = 1-(9Z)-octadecenoyl-2-pentadecanoyl-sn-glycero-3-phosphate + CoA. The enzyme catalyses 1-(9Z-octadecenoyl)-sn-glycero-3-phosphate + octadecanoyl-CoA = 1-(9Z-octadecenoyl)-2-octadecanoyl-sn-glycero-3-phosphate + CoA. The catalysed reaction is nonadecanoyl-CoA + 1-(9Z-octadecenoyl)-sn-glycero-3-phosphate = 1-(9Z)-octadecenoyl-2-nonadecanoyl-sn-glycero-3-phosphate + CoA. It carries out the reaction 1-(9Z-octadecenoyl)-sn-glycero-3-phosphoethanolamine + (9Z)-octadecenoyl-CoA = 1,2-di-(9Z-octadecenoyl)-sn-glycero-3-phosphoethanolamine + CoA. It catalyses the reaction 1-(9Z-octadecenoyl)-sn-glycero-3-phosphocholine + (9Z)-octadecenoyl-CoA = 1,2-di-(9Z-octadecenoyl)-sn-glycero-3-phosphocholine + CoA. The enzyme catalyses 1-(9Z-octadecenoyl)-sn-glycero-3-phospho-(1D-myo-inositol) + (5Z,8Z,11Z,14Z)-eicosatetraenoyl-CoA = 1-(9Z-octadecenoyl)-2-(5Z,8Z,11Z,14Z-eicosatetraenoyl)-sn-glycero-3-phospho-1D-myo-inositol + CoA. The catalysed reaction is 1-(9Z-octadecenoyl)-sn-glycero-3-phospho-L-serine + (9Z)-octadecenoyl-CoA = 1,2-di-(9Z)-octadecenoyl-sn-glycero-3-phospho-L-serine + CoA. It carries out the reaction 1-(9Z-octadecenoyl)-sn-glycero-3-phospho-L-serine + (5Z,8Z,11Z,14Z)-eicosatetraenoyl-CoA = 1-(9Z-octadecenoyl)-2-(5Z,8Z,11Z,14Z-eicosatetraenoyl)-sn-glycero-3-phospho-L-serine + CoA. It catalyses the reaction 1-hexadecanoyl-sn-glycero-3-phosphate + (9Z)-octadecenoyl-CoA = 1-hexadecanoyl-2-(9Z-octadecenoyl)-sn-glycero-3-phosphate + CoA. The enzyme catalyses 1-heptadecanoyl-sn-glycero-3-phosphate + (9Z)-octadecenoyl-CoA = 1-heptadecanoyl-2-(9Z)-octadecenoyl-sn-glycero-3-phosphate + CoA. The catalysed reaction is 1-(5Z,8Z,11Z,14Z-eicosatetraenoyl)-sn-glycero-3-phosphate + (9Z)-octadecenoyl-CoA = 1-(5Z,8Z,11Z,14Z)-eicosatetraenoyl-2-(9Z)-octadecenoyl-sn-glycero-3-phosphate + CoA. It carries out the reaction 1-octadecanoyl-sn-glycero-3-phosphate + (9Z)-octadecenoyl-CoA = 1-octadecanoyl-2-(9Z-octadecenoyl)-sn-glycero-3-phosphate + CoA. It catalyses the reaction 1-(9Z-octadecenoyl)-sn-glycero-3-phosphate + (5Z,8Z,11Z,14Z)-eicosatetraenoyl-CoA = 1-(9Z)-octadecenoyl-2-(5Z,8Z,11Z,14Z)-eicosatetraenoyl-sn-glycero-3-phosphate + CoA. The enzyme catalyses heptadecanoyl-CoA + 1-(9Z-octadecenoyl)-sn-glycero-3-phosphate = 1-(9Z)-octadecenoyl-2-heptadecanoyl-sn-glycero-3-phosphate + CoA. The catalysed reaction is 1-(9Z-octadecenoyl)-sn-glycero-3-phosphocholine + (5Z,8Z,11Z,14Z)-eicosatetraenoyl-CoA = 1-(9Z)-octadecenoyl-2-(5Z,8Z,11Z,14Z)-icosatetraenoyl-sn-glycero-3-phosphocholine + CoA. It carries out the reaction 1-(9Z-octadecenoyl)-sn-glycero-3-phosphate + (9Z)-octadecenoyl-CoA = 1,2-di-(9Z-octadecenoyl)-sn-glycero-3-phosphate + CoA. It catalyses the reaction 1-(9Z-octadecenoyl)-sn-glycero-3-phosphate + hexadecanoyl-CoA = 1-hexadecanoyl-2-(9Z-octadecenoyl)-sn-glycero-3-phosphate + CoA. It functions in the pathway phospholipid metabolism; CDP-diacylglycerol biosynthesis; CDP-diacylglycerol from sn-glycerol 3-phosphate: step 2/3. In terms of biological role, converts 1-acyl-sn-glycerol-3-phosphate (lysophosphatidic acid or LPA) into 1,2-diacyl-sn-glycerol-3-phosphate (phosphatidic acid or PA) by incorporating an acyl moiety at the sn-2 position of the glycerol backbone. Acts on LPA containing saturated or unsaturated fatty acids C15:0-C20:4 at the sn-1 position using C18:1-CoA as the acyl donor. Also acts on lysophosphatidylethanolamine using oleoyl-CoA, but not arachidonoyl-CoA, and lysophosphatidylinositol using arachidonoyl-CoA, but not oleoyl-CoA. Activity toward lysophosphatidylglycerol not detectable. In Homo sapiens (Human), this protein is 1-acyl-sn-glycerol-3-phosphate acyltransferase epsilon (AGPAT5).